The sequence spans 101 residues: NAD(P)H-quinone oxidoreductase subunit 4L, chloroplastic (101 aa).

3 helical membrane passes run 2–22 (MTEY…YGLI), 32–52 (MCLE…SDLF), and 61–81 (IFSI…PAIV).

This sequence belongs to the complex I subunit 4L family. In terms of assembly, NDH is composed of at least 16 different subunits, 5 of which are encoded in the nucleus.

Its subcellular location is the plastid. The protein localises to the chloroplast thylakoid membrane. It catalyses the reaction a plastoquinone + NADH + (n+1) H(+)(in) = a plastoquinol + NAD(+) + n H(+)(out). The catalysed reaction is a plastoquinone + NADPH + (n+1) H(+)(in) = a plastoquinol + NADP(+) + n H(+)(out). NDH shuttles electrons from NAD(P)H:plastoquinone, via FMN and iron-sulfur (Fe-S) centers, to quinones in the photosynthetic chain and possibly in a chloroplast respiratory chain. The immediate electron acceptor for the enzyme in this species is believed to be plastoquinone. Couples the redox reaction to proton translocation, and thus conserves the redox energy in a proton gradient. The chain is NAD(P)H-quinone oxidoreductase subunit 4L, chloroplastic from Calycanthus floridus var. glaucus (Eastern sweetshrub).